A 145-amino-acid chain; its full sequence is Bacilliredoxin SERP1006 (145 aa).

Belongs to the bacilliredoxin family.

This chain is Bacilliredoxin SERP1006, found in Staphylococcus epidermidis (strain ATCC 35984 / DSM 28319 / BCRC 17069 / CCUG 31568 / BM 3577 / RP62A).